The following is a 405-amino-acid chain: Deoxyguanosinetriphosphate triphosphohydrolase-like protein (405 aa).

One can recognise an HD domain in the interval 75-219 (RLTHTIEVAQ…AAIADDIAYN (145 aa)).

Belongs to the dGTPase family. Type 2 subfamily.

The polypeptide is Deoxyguanosinetriphosphate triphosphohydrolase-like protein (Rhizobium leguminosarum bv. trifolii (strain WSM2304)).